Consider the following 401-residue polypeptide: Restriction of telomere capping protein 4 (401 aa).

The residue at position 23 (serine 23) is a Phosphoserine. A compositionally biased stretch (basic and acidic residues) spans 35–48 (KHDIHDRESDDLSG). A disordered region spans residues 35 to 59 (KHDIHDRESDDLSGHDAFSPSKKRG).

The protein belongs to the RTC4 family.

Its subcellular location is the cytoplasm. It is found in the nucleus. May be involved in a process influencing telomere capping. This Saccharomyces cerevisiae (strain ATCC 204508 / S288c) (Baker's yeast) protein is Restriction of telomere capping protein 4 (RTC4).